We begin with the raw amino-acid sequence, 364 residues long: Peptide chain release factor 2 (364 aa).

Q251 carries the N5-methylglutamine modification.

It belongs to the prokaryotic/mitochondrial release factor family. Methylated by PrmC. Methylation increases the termination efficiency of RF2.

It localises to the cytoplasm. Functionally, peptide chain release factor 2 directs the termination of translation in response to the peptide chain termination codons UGA and UAA. This Buchnera aphidicola subsp. Schizaphis graminum (strain Sg) protein is Peptide chain release factor 2 (prfB).